The following is a 74-amino-acid chain: Exodeoxyribonuclease 7 small subunit (74 aa).

Belongs to the XseB family. In terms of assembly, heterooligomer composed of large and small subunits.

It localises to the cytoplasm. It catalyses the reaction Exonucleolytic cleavage in either 5'- to 3'- or 3'- to 5'-direction to yield nucleoside 5'-phosphates.. In terms of biological role, bidirectionally degrades single-stranded DNA into large acid-insoluble oligonucleotides, which are then degraded further into small acid-soluble oligonucleotides. The protein is Exodeoxyribonuclease 7 small subunit of Clostridium botulinum (strain Eklund 17B / Type B).